The chain runs to 203 residues: Pyridoxal 5'-phosphate synthase subunit PdxT (203 aa).

51–53 contacts L-glutamine; the sequence is GES. Catalysis depends on Cys-83, which acts as the Nucleophile. L-glutamine is bound by residues Arg-110 and 137-138; that span reads IR. Residues His-172 and Glu-174 each act as charge relay system in the active site.

The protein belongs to the glutaminase PdxT/SNO family. As to quaternary structure, in the presence of PdxS, forms a dodecamer of heterodimers. Only shows activity in the heterodimer.

It catalyses the reaction aldehydo-D-ribose 5-phosphate + D-glyceraldehyde 3-phosphate + L-glutamine = pyridoxal 5'-phosphate + L-glutamate + phosphate + 3 H2O + H(+). It carries out the reaction L-glutamine + H2O = L-glutamate + NH4(+). The protein operates within cofactor biosynthesis; pyridoxal 5'-phosphate biosynthesis. Its function is as follows. Catalyzes the hydrolysis of glutamine to glutamate and ammonia as part of the biosynthesis of pyridoxal 5'-phosphate. The resulting ammonia molecule is channeled to the active site of PdxS. This chain is Pyridoxal 5'-phosphate synthase subunit PdxT, found in Thermoplasma acidophilum (strain ATCC 25905 / DSM 1728 / JCM 9062 / NBRC 15155 / AMRC-C165).